Reading from the N-terminus, the 257-residue chain is NAD-capped RNA hydrolase NudC (257 aa).

A substrate-binding site is contributed by R69. 2 residues coordinate Zn(2+): C98 and C101. E111 contacts substrate. The Zn(2+) site is built by C116 and C119. Y124 contacts substrate. In terms of domain architecture, Nudix hydrolase spans 125-248 (PQIAPCIIVA…TVARRLIEDT (124 aa)). Positions 158, 174, and 178 each coordinate a divalent metal cation. The Nudix box motif lies at 159–180 (GFVEVGETLEQAVAREVMEESG). Residue 192–199 (QPWPFPQS) participates in substrate binding. E219 contributes to the a divalent metal cation binding site. A241 serves as a coordination point for substrate.

It belongs to the Nudix hydrolase family. NudC subfamily. Homodimer. The cofactor is Mg(2+). Requires Mn(2+) as cofactor. It depends on Zn(2+) as a cofactor.

The enzyme catalyses a 5'-end NAD(+)-phospho-ribonucleoside in mRNA + H2O = a 5'-end phospho-adenosine-phospho-ribonucleoside in mRNA + beta-nicotinamide D-ribonucleotide + 2 H(+). It carries out the reaction NAD(+) + H2O = beta-nicotinamide D-ribonucleotide + AMP + 2 H(+). The catalysed reaction is NADH + H2O = reduced beta-nicotinamide D-ribonucleotide + AMP + 2 H(+). Its function is as follows. mRNA decapping enzyme that specifically removes the nicotinamide adenine dinucleotide (NAD) cap from a subset of mRNAs by hydrolyzing the diphosphate linkage to produce nicotinamide mononucleotide (NMN) and 5' monophosphate mRNA. The NAD-cap is present at the 5'-end of some mRNAs and stabilizes RNA against 5'-processing. Has preference for mRNAs with a 5'-end purine. Catalyzes the hydrolysis of a broad range of dinucleotide pyrophosphates. This Klebsiella pneumoniae (strain 342) protein is NAD-capped RNA hydrolase NudC.